We begin with the raw amino-acid sequence, 74 residues long: MDFEEMMKELEEIVNRLESEDLSLEESIELFQRGVELYKKCREILQKEQLKIIDVLKELEGDEDDAGRNQEDES.

Belongs to the XseB family. As to quaternary structure, heterooligomer composed of large and small subunits.

It is found in the cytoplasm. The catalysed reaction is Exonucleolytic cleavage in either 5'- to 3'- or 3'- to 5'-direction to yield nucleoside 5'-phosphates.. Functionally, bidirectionally degrades single-stranded DNA into large acid-insoluble oligonucleotides, which are then degraded further into small acid-soluble oligonucleotides. The polypeptide is Exodeoxyribonuclease 7 small subunit (Thermotoga neapolitana (strain ATCC 49049 / DSM 4359 / NBRC 107923 / NS-E)).